The sequence spans 237 residues: tRNA (guanine-N(1)-)-methyltransferase (237 aa).

Residues G115 and 134-139 (LGDFVL) contribute to the S-adenosyl-L-methionine site.

Belongs to the RNA methyltransferase TrmD family. Homodimer.

The protein localises to the cytoplasm. The enzyme catalyses guanosine(37) in tRNA + S-adenosyl-L-methionine = N(1)-methylguanosine(37) in tRNA + S-adenosyl-L-homocysteine + H(+). Specifically methylates guanosine-37 in various tRNAs. In Synechococcus sp. (strain RCC307), this protein is tRNA (guanine-N(1)-)-methyltransferase.